Consider the following 112-residue polypeptide: Putative pterin-4-alpha-carbinolamine dehydratase (112 aa).

It belongs to the pterin-4-alpha-carbinolamine dehydratase family.

The enzyme catalyses (4aS,6R)-4a-hydroxy-L-erythro-5,6,7,8-tetrahydrobiopterin = (6R)-L-erythro-6,7-dihydrobiopterin + H2O. The chain is Putative pterin-4-alpha-carbinolamine dehydratase from Dechloromonas aromatica (strain RCB).